We begin with the raw amino-acid sequence, 327 residues long: Movement protein (327 aa).

A coiled-coil region spans residues 297-327 (SASSSNTENELARVSQNIDLLKNKLKEICGE).

This sequence belongs to the caulimoviridae movement protein family. As to quaternary structure, homotrimer, through the coiled-coil domain. Interacts with VAP. May interact (via N-terminus) with host prenylated Rab acceptor protein 1D (PRA1D).

Its subcellular location is the host cell junction. The protein localises to the host plasmodesma. Transports viral genome to neighboring plant cells directly through plasmosdesmata, without any budding. The movement protein allows efficient cell to cell propagation, by bypassing the host cell wall barrier. Acts by forming tubules structures that increase the size exclusion limit (SEL) of plasmodesmata, thereby allowing viral ribonucleocapsids to spread directly to neighboring cells. The chain is Movement protein from Arabidopsis thaliana (Mouse-ear cress).